Here is a 431-residue protein sequence, read N- to C-terminus: MSKVITKYDLVGDTLVLILAGGRGSRLHELTDKRAKPALYFGGNRRIIDFALSNCINSGLNRIGVITQYAAHSLLRHLQTGWSFLPQERGEFVDMLPARQQIDDNTWYRGTADSVYQNMAIIKNHYKPKYILILAGDHIYKMDYSQMILDHVNSGAKCTVGCIEVPRESAKEFGVMAVNENLKVKAFVEKPSDPPAMIGKPNSSLASMGIYVFNAEYLYETLERTVNSPQTSHDFGKDIMPMALEDEVLYAHPFDRSCMGRNTEGEIYWRDVGTLDSYWQSNIDLVSKEPQLDIYDQTWPIRGNPVQAYPSKFFYDDPACKQVDNSLIAGGCVITNASISYSVLFDNIHVNEGTLIDESVILPQVKVGKNCILKRCIVDRHVQIPDGMQIGVDPEEDSKHFRISSKGIVLVTEKMLQKMKGETVKSEDDLD.

Residues tyrosine 108, glycine 174, 189 to 190, and serine 207 contribute to the alpha-D-glucose 1-phosphate site; that span reads EK.

The protein belongs to the bacterial/plant glucose-1-phosphate adenylyltransferase family. In terms of assembly, homotetramer.

The catalysed reaction is alpha-D-glucose 1-phosphate + ATP + H(+) = ADP-alpha-D-glucose + diphosphate. It participates in glycan biosynthesis; glycogen biosynthesis. Functionally, involved in the biosynthesis of ADP-glucose, a building block required for the elongation reactions to produce glycogen. Catalyzes the reaction between ATP and alpha-D-glucose 1-phosphate (G1P) to produce pyrophosphate and ADP-Glc. The chain is Glucose-1-phosphate adenylyltransferase from Actinobacillus succinogenes (strain ATCC 55618 / DSM 22257 / CCUG 43843 / 130Z).